The chain runs to 352 residues: Keratocan (352 aa).

The first 20 residues, methionine 1–serine 20, serve as a signal peptide directing secretion. The LRRNT domain occupies aspartate 33–serine 71. Disulfide bonds link cysteine 42-cysteine 48 and cysteine 46-cysteine 58. LRR repeat units follow at residues arginine 72 to asparagine 93, glutamine 96 to leucine 117, lysine 122 to arginine 142, serine 143 to asparagine 164, asparagine 167 to aspartate 180, asparagine 193 to alanine 213, asparagine 214 to valine 235, lysine 238 to glycine 258, serine 263 to alanine 282, and histidine 283 to proline 304. Asparagine 93 is a glycosylation site (N-linked (GlcNAc...) (keratan sulfate) asparagine). Asparagine 167 is a glycosylation site (N-linked (GlcNAc...) (keratan sulfate) asparagine). Asparagine 222 carries N-linked (GlcNAc...) asparagine glycosylation. The N-linked (GlcNAc...) asparagine glycan is linked to asparagine 298. Cysteine 303 and cysteine 343 form a disulfide bridge.

Belongs to the small leucine-rich proteoglycan (SLRP) family. SLRP class II subfamily. Binds keratan sulfate chains. In terms of tissue distribution, cornea (at protein level). Increased expression in the stroma of keratoconus corneas. Also detected in trachea, and in low levels, in intestine, skeletal muscle, ovary, lung and putamen.

It localises to the secreted. It is found in the extracellular space. The protein localises to the extracellular matrix. May be important in developing and maintaining corneal transparency and for the structure of the stromal matrix. The protein is Keratocan (KERA) of Homo sapiens (Human).